A 249-amino-acid chain; its full sequence is Triosephosphate isomerase (249 aa).

Asparagine 12 and lysine 14 together coordinate substrate. Lysine 14 bears the N6-acetyllysine mark. 3'-nitrotyrosine is present on tyrosine 68. Serine 80 is modified (phosphoserine). The active-site Electrophile is histidine 96. Residue serine 106 is modified to Phosphoserine. A Glycyl lysine isopeptide (Lys-Gly) (interchain with G-Cter in SUMO1) cross-link involves residue lysine 142. Lysine 149 is subject to N6-succinyllysine. Lysine 156 bears the N6-acetyllysine; alternate mark. N6-succinyllysine; alternate is present on lysine 156. Serine 159 carries the post-translational modification Phosphoserine. The Proton acceptor role is filled by glutamate 166. Threonine 173 carries the post-translational modification Phosphothreonine. Lysine 194 carries the post-translational modification N6-acetyllysine; alternate. Lysine 194 is modified (N6-succinyllysine; alternate). Lysine 194 carries the N6-methyllysine; alternate modification. Serine 198 carries the phosphoserine modification. Tyrosine 209 is subject to 3'-nitrotyrosine. Serine 212 carries the phosphoserine modification. The residue at position 214 (threonine 214) is a Phosphothreonine. The residue at position 223 (serine 223) is a Phosphoserine. Lysine 238 carries the N6-acetyllysine modification.

The protein belongs to the triosephosphate isomerase family. As to quaternary structure, homodimer.

It is found in the cytoplasm. The catalysed reaction is dihydroxyacetone phosphate = methylglyoxal + phosphate. The enzyme catalyses D-glyceraldehyde 3-phosphate = dihydroxyacetone phosphate. The protein operates within carbohydrate degradation; glycolysis; D-glyceraldehyde 3-phosphate from glycerone phosphate: step 1/1. It functions in the pathway carbohydrate biosynthesis; gluconeogenesis. Triosephosphate isomerase is an extremely efficient metabolic enzyme that catalyzes the interconversion between dihydroxyacetone phosphate (DHAP) and D-glyceraldehyde-3-phosphate (G3P) in glycolysis and gluconeogenesis. In terms of biological role, it is also responsible for the non-negligible production of methylglyoxal a reactive cytotoxic side-product that modifies and can alter proteins, DNA and lipids. In Macaca fascicularis (Crab-eating macaque), this protein is Triosephosphate isomerase (TPI1).